Here is a 310-residue protein sequence, read N- to C-terminus: Oxygen-dependent coproporphyrinogen-III oxidase (310 aa).

S92 contacts substrate. A divalent metal cation-binding residues include H96 and H106. The Proton donor role is filled by H106. 108 to 110 (NVR) provides a ligand contact to substrate. Positions 145 and 175 each coordinate a divalent metal cation. The segment at 240–275 (YVEFNLIWDRGTLFGLQSGGRTESILMSMPPLARWE) is important for dimerization. 258–260 (GGR) lines the substrate pocket.

The protein belongs to the aerobic coproporphyrinogen-III oxidase family. As to quaternary structure, homodimer. A divalent metal cation is required as a cofactor.

The protein localises to the cytoplasm. It catalyses the reaction coproporphyrinogen III + O2 + 2 H(+) = protoporphyrinogen IX + 2 CO2 + 2 H2O. The protein operates within porphyrin-containing compound metabolism; protoporphyrin-IX biosynthesis; protoporphyrinogen-IX from coproporphyrinogen-III (O2 route): step 1/1. Involved in the heme biosynthesis. Catalyzes the aerobic oxidative decarboxylation of propionate groups of rings A and B of coproporphyrinogen-III to yield the vinyl groups in protoporphyrinogen-IX. This chain is Oxygen-dependent coproporphyrinogen-III oxidase, found in Pectobacterium carotovorum subsp. carotovorum (strain PC1).